The chain runs to 545 residues: CTP synthase (545 aa).

The segment at Met-1–Leu-265 is amidoligase domain. Ser-15 is a CTP binding site. Ser-15 contacts UTP. ATP is bound by residues Ser-16–Leu-21 and Asp-73. Mg(2+)-binding residues include Asp-73 and Glu-141. CTP is bound by residues Asp-148 to Glu-150, Lys-188 to Gln-193, and Lys-224. UTP contacts are provided by residues Lys-188–Gln-193 and Lys-224. One can recognise a Glutamine amidotransferase type-1 domain in the interval Glu-290–Ile-534. Gly-349 contributes to the L-glutamine binding site. Cys-376 acts as the Nucleophile; for glutamine hydrolysis in catalysis. L-glutamine contacts are provided by residues Leu-377–Gln-380, Glu-400, and Arg-460. Residues His-507 and Glu-509 contribute to the active site.

The protein belongs to the CTP synthase family. In terms of assembly, homotetramer.

It carries out the reaction UTP + L-glutamine + ATP + H2O = CTP + L-glutamate + ADP + phosphate + 2 H(+). The enzyme catalyses L-glutamine + H2O = L-glutamate + NH4(+). The catalysed reaction is UTP + NH4(+) + ATP = CTP + ADP + phosphate + 2 H(+). It participates in pyrimidine metabolism; CTP biosynthesis via de novo pathway; CTP from UDP: step 2/2. Its activity is regulated as follows. Allosterically activated by GTP, when glutamine is the substrate; GTP has no effect on the reaction when ammonia is the substrate. The allosteric effector GTP functions by stabilizing the protein conformation that binds the tetrahedral intermediate(s) formed during glutamine hydrolysis. Inhibited by the product CTP, via allosteric rather than competitive inhibition. Catalyzes the ATP-dependent amination of UTP to CTP with either L-glutamine or ammonia as the source of nitrogen. Regulates intracellular CTP levels through interactions with the four ribonucleotide triphosphates. This is CTP synthase from Tropheryma whipplei (strain TW08/27) (Whipple's bacillus).